Here is a 268-residue protein sequence, read N- to C-terminus: tRNA pseudouridine synthase A (268 aa).

Asp-52 functions as the Nucleophile in the catalytic mechanism. Tyr-110 serves as a coordination point for substrate.

It belongs to the tRNA pseudouridine synthase TruA family. Homodimer.

The catalysed reaction is uridine(38/39/40) in tRNA = pseudouridine(38/39/40) in tRNA. In terms of biological role, formation of pseudouridine at positions 38, 39 and 40 in the anticodon stem and loop of transfer RNAs. The sequence is that of tRNA pseudouridine synthase A from Prochlorococcus marinus (strain AS9601).